The primary structure comprises 209 residues: Ribosomal RNA large subunit methyltransferase E (209 aa).

S-adenosyl-L-methionine is bound by residues Gly63, Trp65, Asp83, Asp99, and Asp124. The active-site Proton acceptor is Lys164.

This sequence belongs to the class I-like SAM-binding methyltransferase superfamily. RNA methyltransferase RlmE family.

It is found in the cytoplasm. The enzyme catalyses uridine(2552) in 23S rRNA + S-adenosyl-L-methionine = 2'-O-methyluridine(2552) in 23S rRNA + S-adenosyl-L-homocysteine + H(+). Functionally, specifically methylates the uridine in position 2552 of 23S rRNA at the 2'-O position of the ribose in the fully assembled 50S ribosomal subunit. The protein is Ribosomal RNA large subunit methyltransferase E of Baumannia cicadellinicola subsp. Homalodisca coagulata.